We begin with the raw amino-acid sequence, 37 residues long: MPYSLQPQPEGFADVPGFPLCMYMVRGSTWTLVPPDL.

2 consecutive propeptides follow at residues 1-7 (MPYSLQP) and 18-37 (FPLC…PPDL).

Belongs to the GnRH family. In terms of tissue distribution, preoptic area and testis.

The protein resides in the secreted. Precursor for a gonadotropin regulatory hormone (GNRH) related decapeptide. The chain is Putative preoptic regulatory factor 1 (Porf1) from Rattus norvegicus (Rat).